A 470-amino-acid chain; its full sequence is Serine--tRNA ligase (470 aa).

272–274 is an L-serine binding site; sequence TAE. 303 to 305 provides a ligand contact to ATP; the sequence is RAE. Glutamate 326 lines the L-serine pocket. Residue 393–396 participates in ATP binding; the sequence is EISS. Serine 428 is an L-serine binding site.

This sequence belongs to the class-II aminoacyl-tRNA synthetase family. Type-1 seryl-tRNA synthetase subfamily. In terms of assembly, homodimer. The tRNA molecule binds across the dimer.

It is found in the cytoplasm. The catalysed reaction is tRNA(Ser) + L-serine + ATP = L-seryl-tRNA(Ser) + AMP + diphosphate + H(+). The enzyme catalyses tRNA(Sec) + L-serine + ATP = L-seryl-tRNA(Sec) + AMP + diphosphate + H(+). Its pathway is aminoacyl-tRNA biosynthesis; selenocysteinyl-tRNA(Sec) biosynthesis; L-seryl-tRNA(Sec) from L-serine and tRNA(Sec): step 1/1. Its function is as follows. Catalyzes the attachment of serine to tRNA(Ser). Is also able to aminoacylate tRNA(Sec) with serine, to form the misacylated tRNA L-seryl-tRNA(Sec), which will be further converted into selenocysteinyl-tRNA(Sec). The chain is Serine--tRNA ligase from Nitrobacter hamburgensis (strain DSM 10229 / NCIMB 13809 / X14).